The chain runs to 470 residues: MSANIGKIVQVIGAVVDVEFPSGQLPNILNALDIKNPNNTDAPDLVCEVAQHLGDNIVRTIAMDATEGLVRGMEASDTGKPIMVPVGKASLGRIMNVVGRPVDELGPINADKSLPIHRAAPEFTEQNTKVELLETGIKVVDLLIPFPKGGKMGLFGGAGVGKTVILMEMINNIAKQHGGISVFAGVGERTREGNDLYHEMKDAGVLEKAALIYGQMNEPPGARARVALTALACAEYFRDVENQDVLLFVDNIFRFTQAGSEVSALLGRMPSAVGYQPTLGTDLGALQERITSTTKGSITSVQAVYVPADDLTDPAPATTFSHLDGTLVLSRQIAELGIYPAVDPLDSTSRILDPNVVGVEHYGVARQVQQVLQKYKDLQDIIAILGMDELSDEDKLTVARARRIQRFLSQPFHVAETFTGTPGVYVKLEDTIKGFMGILNGDYDHLAEGDFYMVGGIEMALEKYKKRQEQ.

Residue 156–163 (GGAGVGKT) participates in ATP binding.

Belongs to the ATPase alpha/beta chains family. F-type ATPases have 2 components, CF(1) - the catalytic core - and CF(0) - the membrane proton channel. CF(1) has five subunits: alpha(3), beta(3), gamma(1), delta(1), epsilon(1). CF(0) has three main subunits: a(1), b(2) and c(9-12). The alpha and beta chains form an alternating ring which encloses part of the gamma chain. CF(1) is attached to CF(0) by a central stalk formed by the gamma and epsilon chains, while a peripheral stalk is formed by the delta and b chains.

Its subcellular location is the cell inner membrane. The catalysed reaction is ATP + H2O + 4 H(+)(in) = ADP + phosphate + 5 H(+)(out). Its function is as follows. Produces ATP from ADP in the presence of a proton gradient across the membrane. The catalytic sites are hosted primarily by the beta subunits. The sequence is that of ATP synthase subunit beta from Nitratidesulfovibrio vulgaris (strain ATCC 29579 / DSM 644 / CCUG 34227 / NCIMB 8303 / VKM B-1760 / Hildenborough) (Desulfovibrio vulgaris).